Here is a 515-residue protein sequence, read N- to C-terminus: Serine--tRNA ligase, cytoplasmic (515 aa).

Residues 9–61 (RTDKGGDPEIIRETQRKRFKDVSLVDKLVQADTEWRKCRFTADNLNKAKNLCS) form an interaction with tRNA region. L-serine is bound by residues Thr271 and Arg302. Residues 302-304 (RQE) and 318-321 (VHQF) contribute to the ATP site. L-serine is bound at residue Glu325. Residue 391–394 (ELVS) coordinates ATP. Asn427 contacts L-serine. The tract at residues 475-515 (PIDQETTKKQKKQQEGGKKKKHQGGDADLENKVENMSVNDS) is disordered. The segment covering 479 to 507 (ETTKKQKKQQEGGKKKKHQGGDADLENKV) has biased composition (basic and acidic residues). Positions 482–494 (KKQKKQQEGGKKK) match the Nuclear localization signal motif.

It belongs to the class-II aminoacyl-tRNA synthetase family. Type-1 seryl-tRNA synthetase subfamily.

The protein localises to the cytoplasm. It localises to the nucleus. It carries out the reaction tRNA(Ser) + L-serine + ATP = L-seryl-tRNA(Ser) + AMP + diphosphate + H(+). The enzyme catalyses tRNA(Sec) + L-serine + ATP = L-seryl-tRNA(Sec) + AMP + diphosphate + H(+). Catalyzes the attachment of serine to tRNA(Ser) in a two-step reaction: serine is first activated by ATP to form Ser-AMP and then transferred to the acceptor end of tRNA(Ser). Is probably also able to aminoacylate tRNA(Sec) with serine, to form the misacylated tRNA L-seryl-tRNA(Sec), which will be further converted into selenocysteinyl-tRNA(Sec). In the nucleus, binds to the vegfa core promoter and prevents myc binding and transcriptional activation by myc. Thereby inhibits the production of vegfa and sprouting angiogenesis mediated by vegfa. The protein is Serine--tRNA ligase, cytoplasmic (sars1) of Danio rerio (Zebrafish).